A 449-amino-acid chain; its full sequence is Putative cytochrome P450 135A1 (449 aa).

Cysteine 383 lines the heme pocket.

It belongs to the cytochrome P450 family. Heme is required as a cofactor.

The protein is Putative cytochrome P450 135A1 (cyp135A1) of Mycobacterium tuberculosis (strain CDC 1551 / Oshkosh).